The primary structure comprises 375 residues: Succinyl-diaminopimelate desuccinylase (375 aa).

Zn(2+) is bound at residue His-66. The active site involves Asp-68. Asp-99 lines the Zn(2+) pocket. The active-site Proton acceptor is Glu-133. Residues Glu-134, Glu-162, and His-348 each coordinate Zn(2+).

It belongs to the peptidase M20A family. DapE subfamily. Homodimer. It depends on Zn(2+) as a cofactor. Requires Co(2+) as cofactor.

It carries out the reaction N-succinyl-(2S,6S)-2,6-diaminopimelate + H2O = (2S,6S)-2,6-diaminopimelate + succinate. It participates in amino-acid biosynthesis; L-lysine biosynthesis via DAP pathway; LL-2,6-diaminopimelate from (S)-tetrahydrodipicolinate (succinylase route): step 3/3. Functionally, catalyzes the hydrolysis of N-succinyl-L,L-diaminopimelic acid (SDAP), forming succinate and LL-2,6-diaminopimelate (DAP), an intermediate involved in the bacterial biosynthesis of lysine and meso-diaminopimelic acid, an essential component of bacterial cell walls. This is Succinyl-diaminopimelate desuccinylase from Photorhabdus laumondii subsp. laumondii (strain DSM 15139 / CIP 105565 / TT01) (Photorhabdus luminescens subsp. laumondii).